Here is a 203-residue protein sequence, read N- to C-terminus: MGSRRAGSSSSPLFWPAPPSRAADPPPVHDTDGHELRADANYYVLSANRAHGGGLTMAPGHGRHCPLFVSQDPNGQHDGFPVRITPYGVAPSDKIIRLSTDVRISFRAYTTCLQSTEWHIDSELAAGRRHVITGPVKDPSPSGRENAFRIEKYSGAEVHEYKLMSCGDWCQDLGVFRDLKGGAWFLGATEPYHVVVFKKAPPA.

Residues 1–12 (MGSRRAGSSSSP) show a composition bias toward polar residues. Positions 1–22 (MGSRRAGSSSSPLFWPAPPSRA) are cleaved as a signal peptide. Positions 1–34 (MGSRRAGSSSSPLFWPAPPSRAADPPPVHDTDGH) are disordered. Over residues 15–26 (WPAPPSRAADPP) the composition is skewed to pro residues. 2 disulfides stabilise this stretch: Cys-65–Cys-112 and Cys-166–Cys-170.

It belongs to the protease inhibitor I3 (leguminous Kunitz-type inhibitor) family.

Its function is as follows. This protein inhibits independently subtilisin and alpha-amylase. The sequence is that of Alpha-amylase/subtilisin inhibitor from Hordeum vulgare (Barley).